The primary structure comprises 90 residues: Co-chaperonin GroES (90 aa).

It belongs to the GroES chaperonin family. As to quaternary structure, heptamer of 7 subunits arranged in a ring. Interacts with the chaperonin GroEL.

The protein localises to the cytoplasm. In terms of biological role, together with the chaperonin GroEL, plays an essential role in assisting protein folding. The GroEL-GroES system forms a nano-cage that allows encapsulation of the non-native substrate proteins and provides a physical environment optimized to promote and accelerate protein folding. GroES binds to the apical surface of the GroEL ring, thereby capping the opening of the GroEL channel. The protein is Co-chaperonin GroES of Fusobacterium nucleatum subsp. polymorphum (Fusobacterium polymorphum).